The following is a 647-amino-acid chain: Denticleless protein homolog (647 aa).

WD repeat units follow at residues 48–88 (AAAV…KQSS), 95–134 (AHDN…LLGT), 137–177 (GHQC…KDGF), 209–248 (DSQQ…TAYH), 264–303 (TRKL…TTPV), 308–349 (GHSN…QAPM), and 353–393 (GHSQ…EGEN). 2 short sequence motifs (DDB1-binding motif) span residues 167–170 (WDTR) and 238–241 (WDLR). Disordered stretches follow at residues 410–487 (QSPN…SKSP) and 534–647 (KRSR…RTQD). 2 stretches are compositionally biased toward polar residues: residues 426 to 443 (PSKN…SPQP) and 471 to 486 (KMPS…SSKS). Basic and acidic residues predominate over residues 543–558 (LKKEDSFGLESEKRLG). Over residues 586–600 (KGSAQPKSPSSGSSQ) the composition is skewed to low complexity.

This sequence belongs to the WD repeat cdt2 family. Component of the DCX(DTL) E3 ubiquitin ligase complex, at least composed of cul4 (cul4a or cul4b), ddb1, dtl/cdt2 and rbx1.

The protein resides in the nucleus. It localises to the cytoplasm. Its subcellular location is the cytoskeleton. It is found in the microtubule organizing center. The protein localises to the centrosome. The protein resides in the chromosome. It functions in the pathway protein modification; protein ubiquitination. In terms of biological role, substrate-specific adapter of a DCX (DDB1-CUL4-X-box) E3 ubiquitin-protein ligase complex required for cell cycle control, DNA damage response and translesion DNA synthesis. The DCX(DTL) complex, also named CRL4(CDT2) complex, mediates the polyubiquitination and subsequent degradation of CDT1, CDKN1A/p21(CIP1), KMT5A and SDE2. CDT1 degradation in response to DNA damage is necessary to ensure proper cell cycle regulation of DNA replication. CDKN1A/p21(CIP1) degradation during S phase or following UV irradiation is essential to control replication licensing. KMT5A degradation is also important for a proper regulation of mechanisms such as TGF-beta signaling, cell cycle progression, DNA repair and cell migration. Most substrates require their interaction with PCNA for their polyubiquitination: substrates interact with PCNA via their PIP-box, and those containing the 'K+4' motif in the PIP box, recruit the DCX(DTL) complex, leading to their degradation. In undamaged proliferating cells, the DCX(DTL) complex also promotes the 'Lys-164' monoubiquitination of PCNA, thereby being involved in PCNA-dependent translesion DNA synthesis. May play a role in the regulation of the circadian clock. This is Denticleless protein homolog (dtl) from Danio rerio (Zebrafish).